The sequence spans 417 residues: NADH-quinone oxidoreductase subunit D (417 aa).

Belongs to the complex I 49 kDa subunit family. In terms of assembly, NDH-1 is composed of 14 different subunits. Subunits NuoB, C, D, E, F, and G constitute the peripheral sector of the complex.

It is found in the cell inner membrane. The enzyme catalyses a quinone + NADH + 5 H(+)(in) = a quinol + NAD(+) + 4 H(+)(out). NDH-1 shuttles electrons from NADH, via FMN and iron-sulfur (Fe-S) centers, to quinones in the respiratory chain. The immediate electron acceptor for the enzyme in this species is believed to be ubiquinone. Couples the redox reaction to proton translocation (for every two electrons transferred, four hydrogen ions are translocated across the cytoplasmic membrane), and thus conserves the redox energy in a proton gradient. The polypeptide is NADH-quinone oxidoreductase subunit D (Polynucleobacter necessarius subsp. necessarius (strain STIR1)).